The primary structure comprises 251 residues: 2,3-bisphosphoglycerate-dependent phosphoglycerate mutase (251 aa).

Substrate-binding positions include 8-15 (RHGESLWN), 21-22 (TG), Arg60, 87-90 (ERHY), Lys98, 114-115 (RR), and 183-184 (GN). His9 functions as the Tele-phosphohistidine intermediate in the catalytic mechanism. Glu87 functions as the Proton donor/acceptor in the catalytic mechanism.

Belongs to the phosphoglycerate mutase family. BPG-dependent PGAM subfamily.

It carries out the reaction (2R)-2-phosphoglycerate = (2R)-3-phosphoglycerate. Its pathway is carbohydrate degradation; glycolysis; pyruvate from D-glyceraldehyde 3-phosphate: step 3/5. In terms of biological role, catalyzes the interconversion of 2-phosphoglycerate and 3-phosphoglycerate. This is 2,3-bisphosphoglycerate-dependent phosphoglycerate mutase from Thermoanaerobacter pseudethanolicus (strain ATCC 33223 / 39E) (Clostridium thermohydrosulfuricum).